The primary structure comprises 338 residues: MNPLEQLVTQAQTDFAAAIDAAALENAKAKYLGKTGQITEQMKSLGKLAPEERKAQGAVINSAKEKIEAALTARRDALSNAQMEARLNAEAIDITLPGRGRGTGGIHPVMRSWQRVEEIFGSIGFDVADGPEIENDWTNFTALNSPENHPARSMQDTFYIEGKDTQGKPLLLRTHTSPMQVRYARMNKPPIKVIAPGRTYRVDSDATHSPMFHQVEGLWIDENISFADLKGVYLNFVKAFFETDDLQVRFRPSYFPFTEPSAEIDIAFGSGPLKGRWLEVSGAGQVHPTVLRNMGFDPEQFIGFAFGSGLERLTMLRYGINDLRLFYEGDLRFLKQFN.

Glu259 contributes to the Mg(2+) binding site.

It belongs to the class-II aminoacyl-tRNA synthetase family. Phe-tRNA synthetase alpha subunit type 1 subfamily. As to quaternary structure, tetramer of two alpha and two beta subunits. The cofactor is Mg(2+).

It is found in the cytoplasm. It carries out the reaction tRNA(Phe) + L-phenylalanine + ATP = L-phenylalanyl-tRNA(Phe) + AMP + diphosphate + H(+). The polypeptide is Phenylalanine--tRNA ligase alpha subunit (Janthinobacterium sp. (strain Marseille) (Minibacterium massiliensis)).